The sequence spans 280 residues: Thylakoid lumenal protein TL20.3, chloroplastic (280 aa).

A chloroplast-targeting transit peptide spans 1–59; sequence MAFSSLSPLPMKSLDISRSSSSVSRSPYHFQRYLLRRLQLSSRSNLEIKDSSNTREGCC. The transit peptide at 60–90 directs the protein to the thylakoid; sequence SSAESNTWKRILSAAMAAAVIASSSGVPAMA. 2 Pentapeptide repeat domains span residues 124 to 163 and 169 to 208; these read ENFRRANFTSADMRESDFSGSTFNGAYLEKAVAYKANFSG and TLMDRMVLNEANLTNAVLVRSVLTRSDLGGAKIEGADFSD.

Interacts with thioredoxin. Interacts in vitro with LTO1.

The protein localises to the plastid. It is found in the chloroplast thylakoid lumen. Its function is as follows. Pentapeptide repeat protein of unknown function. Subject to degradation when reduced. This chain is Thylakoid lumenal protein TL20.3, chloroplastic, found in Arabidopsis thaliana (Mouse-ear cress).